The following is a 429-amino-acid chain: tRNA (guanine(9)-N1)-methyltransferase (429 aa).

Residues 131-379 enclose the SAM-dependent MTase TRM10-type domain; that stretch reads KERKEAQRRI…AVIPIRKYAP (249 aa). Residues 285-286, Gly305, 309-313, Cys317, Leu331, and 344-346 contribute to the S-adenosyl-L-methionine site; these read LS, DRNRH, and KAL. Residue Asp309 is the Proton acceptor of the active site. Residues 383–429 form a disordered region; it reads AKRAKTETKRNEKVEEEVECTSAEGEEDIGVIEESAEVDPEDVFSNQ. Positions 386–395 are enriched in basic and acidic residues; sequence AKTETKRNEK. A compositionally biased stretch (acidic residues) spans 396-429; it reads VEEEVECTSAEGEEDIGVIEESAEVDPEDVFSNQ.

It belongs to the class IV-like SAM-binding methyltransferase superfamily. TRM10 family. Monomer.

Its subcellular location is the cytoplasm. The protein localises to the nucleus. It carries out the reaction guanosine(9) in tRNA + S-adenosyl-L-methionine = N(1)-methylguanosine(9) in tRNA + S-adenosyl-L-homocysteine + H(+). S-adenosyl-L-methionine-dependent guanine N(1)-methyltransferase that catalyzes the formation of N(1)-methylguanine at position 9 (m1G9) in cytoplasmic tRNA. This chain is tRNA (guanine(9)-N1)-methyltransferase, found in Cryptococcus neoformans var. neoformans serotype D (strain B-3501A) (Filobasidiella neoformans).